The chain runs to 500 residues: Cysteine--tRNA ligase (500 aa).

Cysteine 30 lines the Zn(2+) pocket. A 'HIGH' region motif is present at residues 32–42; it reads PTVYDYAHIGN. Cysteine 224, histidine 263, and glutamate 267 together coordinate Zn(2+). The 'KMSKS' region motif lies at 296–300; it reads KMSKS. Lysine 299 contacts ATP.

Belongs to the class-I aminoacyl-tRNA synthetase family. In terms of assembly, monomer. Zn(2+) is required as a cofactor.

It localises to the cytoplasm. The enzyme catalyses tRNA(Cys) + L-cysteine + ATP = L-cysteinyl-tRNA(Cys) + AMP + diphosphate. The polypeptide is Cysteine--tRNA ligase (Bartonella bacilliformis (strain ATCC 35685 / KC583 / Herrer 020/F12,63)).